We begin with the raw amino-acid sequence, 180 residues long: Large ribosomal subunit protein uL18m (180 aa).

The protein belongs to the universal ribosomal protein uL18 family. As to quaternary structure, component of the mitochondrial ribosome large subunit (39S) which comprises a 16S rRNA and about 50 distinct proteins.

It is found in the mitochondrion. In terms of biological role, together with thiosulfate sulfurtransferase (TST), acts as a mitochondrial import factor for the cytosolic 5S rRNA. The precursor form shows RNA chaperone activity; is able to fold the 5S rRNA into an import-competent conformation that is recognized by rhodanese (TST). Both the cytoplasmic and mitochondrial forms are able to bind to the helix IV-loop D in the gamma domain of the 5S rRNA. The polypeptide is Large ribosomal subunit protein uL18m (Mrpl18) (Mus musculus (Mouse)).